Reading from the N-terminus, the 1256-residue chain is Splicing factor, arginine/serine-rich 19 (1256 aa).

6 disordered regions span residues 1–33, 158–343, 371–395, 408–1030, 1112–1152, and 1221–1256; these read MEEEDESRGKTEESGEDRGDGPPDRDPALSPSA, GKTV…APRR, ALSLPPLPPTDPEIEEGEIVQPEEE, PRQP…TLPP, GSLP…DKYL, and FRKHGRKPGDPPGPPRPPKEPGPPDKGGPGLPLPPL. The segment covering 7 to 27 has biased composition (basic and acidic residues); the sequence is SRGKTEESGEDRGDGPPDRDP. Residues 192 to 206 show a composition bias toward low complexity; the sequence is SSASSSPSPSPSSSS. Positions 207–222 are enriched in pro residues; that stretch reads PSPPPPPPPPPPPALP. Residues 227 to 236 are compositionally biased toward basic and acidic residues; sequence DIYDPFHPTD. At Ser240 the chain carries Phosphoserine. The span at 255 to 265 shows a compositional bias: polar residues; the sequence is TGSNPSSSAGT. The span at 268–282 shows a compositional bias: acidic residues; that stretch reads PEEEEEEEEEEEEEG. The residue at position 328 (Thr328) is a Phosphothreonine. The segment covering 382–393 has biased composition (acidic residues); it reads PEIEEGEIVQPE. The span at 412–424 shows a compositional bias: low complexity; it reads PASVATLASVAAP. A phosphoserine mark is found at Ser442 and Ser447. Basic residues predominate over residues 478-489; the sequence is KILTQRRERYRQ. Ser491, Ser493, Ser510, Ser518, and Ser520 each carry phosphoserine. 2 stretches are compositionally biased toward basic residues: residues 538-553 and 560-577; these read TARRRSRSRSRRRSRS and RGGHRSRSREKRRRRRRS. Ser577 and Ser579 each carry phosphoserine. The span at 592-611 shows a compositional bias: basic residues; sequence RERHRGKRREGGKKKKKRSR. Residues 612–623 show a composition bias toward basic and acidic residues; it reads SRAEKRSGDLEK. Thr663 carries the phosphothreonine modification. A phosphoserine mark is found at Ser676 and Ser682. A Phosphotyrosine modification is found at Tyr689. Residues Ser691 and Ser695 each carry the phosphoserine modification. 2 stretches are compositionally biased toward basic and acidic residues: residues 696-709 and 719-741; these read ADERGGKSDKDRRR and SREKGSRRKALDGDRGRDRDRSS. Composition is skewed to low complexity over residues 752-775 and 793-804; these read PGSGPLPKAPPSSGSSSSSSSCSS and SSTTPAKDSSSS. Lys812 is covalently cross-linked (Glycyl lysine isopeptide (Lys-Gly) (interchain with G-Cter in SUMO2)). Residues 813-831 are compositionally biased toward basic and acidic residues; it reads FSRDRESRSPFLKPDERAP. Phosphoserine occurs at positions 819 and 821. A compositionally biased stretch (basic residues) spans 843 to 875; sequence KPKKTKAKAKAGAKKAKGTKGKTKPSKTRKKVR. Ser876, Ser883, Ser910, and Ser912 each carry phosphoserine. The segment covering 922–935 has biased composition (pro residues); it reads STPPPKVAPPPPAL. 2 positions are modified to phosphothreonine: Thr923 and Thr936. Residues 938–947 show a composition bias toward polar residues; sequence DSQTVDSSCK. Ser939 carries the post-translational modification Phosphoserine. Thr948 is subject to Phosphothreonine. Over residues 969–984 the composition is skewed to acidic residues; that stretch reads EEEEEEEEEEEEEEEQ. Positions 985–1017 are enriched in low complexity; it reads QPATTTATSTAAAAPSTAPSAGSTAGDSGAEDG. The tract at residues 1131–1256 is necessary for interaction with the CTD domain of POLR2A; the sequence is PASDKREGSS…GGPGLPLPPL (126 aa). Residues 1133-1152 are compositionally biased toward basic and acidic residues; sequence SDKREGSSSSEGRGDTDKYL. A compositionally biased stretch (pro residues) spans 1244 to 1256; that stretch reads PDKGGPGLPLPPL.

The protein belongs to the splicing factor SR family. As to quaternary structure, interacts with POLR2A.

The protein localises to the nucleus. Its function is as follows. May function in pre-mRNA splicing. The sequence is that of Splicing factor, arginine/serine-rich 19 (Scaf1) from Mus musculus (Mouse).